Here is a 748-residue protein sequence, read N- to C-terminus: Junctophilin-3 (748 aa).

Residues 1–727 (MSSGGRFNFD…LKSSTGSAPI (727 aa)) are Cytoplasmic-facing. 6 MORN repeats span residues 15–37 (YCGG…KGQG), 39–60 (YTGS…SGNT), 61–82 (YQGT…GKWV), 83–105 (YKGE…GNGA), 107–129 (YEGT…DGGT), and 130–152 (YQGQ…PYGM). A disordered region spans residues 230–259 (SKSSLASQRSKQSSFRSEAGMSTVSSTASD). Residues 231–244 (KSSLASQRSKQSSF) are compositionally biased toward low complexity. Residues 249 to 259 (GMSTVSSTASD) are compositionally biased toward polar residues. MORN repeat units lie at residues 288–310 (YVGE…DGLK) and 311–333 (YEGE…DGTK). The tract at residues 416 to 496 (AKEFSPSFQH…TPPPAPAARN (81 aa)) is disordered. Position 440 is a phosphoserine (Ser-440). The segment covering 448 to 457 (STGTPLQQES) has biased composition (polar residues). Thr-451 bears the Phosphothreonine mark. Ser-457 is modified (phosphoserine). Thr-471 carries the phosphothreonine modification. A phosphoserine mark is found at Ser-475 and Ser-506. 2 disordered regions span residues 526-597 (CARS…SPGG) and 624-649 (HPQK…EDRG). Residues 639–649 (LGDDHRPEDRG) show a composition bias toward basic and acidic residues. Residues Ser-703 and Ser-710 each carry the phosphoserine modification. A helical; Anchor for type IV membrane protein transmembrane segment spans residues 728 to 748 (LVVMVILLNIGVAILFINFFI).

The protein belongs to the junctophilin family. As to expression, specifically expressed in brain.

It is found in the cell membrane. The protein resides in the endoplasmic reticulum membrane. In terms of biological role, junctophilins contribute to the formation of junctional membrane complexes (JMCs) which link the plasma membrane with the endoplasmic or sarcoplasmic reticulum in excitable cells. Provides a structural foundation for functional cross-talk between the cell surface and intracellular calcium release channels. JPH3 is brain-specific and appears to have an active role in certain neurons involved in motor coordination and memory. This Homo sapiens (Human) protein is Junctophilin-3 (JPH3).